Here is a 229-residue protein sequence, read N- to C-terminus: Protein FMP52-2, mitochondrial (229 aa).

The transit peptide at 1–45 (MAAGAFILGSTGLCGYQMLRFAEKSSLFDKISTVGRKLPDFKSEK) directs the protein to the mitochondrion.

This sequence belongs to the FMP52 family.

The protein resides in the mitochondrion outer membrane. The polypeptide is Protein FMP52-2, mitochondrial (FMP522) (Scheffersomyces stipitis (strain ATCC 58785 / CBS 6054 / NBRC 10063 / NRRL Y-11545) (Yeast)).